The following is a 480-amino-acid chain: Protein nucleotidyltransferase YdiU (480 aa).

Positions 86, 88, 89, 109, 121, 122, 172, and 179 each coordinate ATP. The active-site Proton acceptor is Asp-248. Residues Asn-249 and Asp-258 each contribute to the Mg(2+) site. Position 258 (Asp-258) interacts with ATP.

Belongs to the SELO family. Mg(2+) serves as cofactor. The cofactor is Mn(2+).

The catalysed reaction is L-seryl-[protein] + ATP = 3-O-(5'-adenylyl)-L-seryl-[protein] + diphosphate. It catalyses the reaction L-threonyl-[protein] + ATP = 3-O-(5'-adenylyl)-L-threonyl-[protein] + diphosphate. The enzyme catalyses L-tyrosyl-[protein] + ATP = O-(5'-adenylyl)-L-tyrosyl-[protein] + diphosphate. It carries out the reaction L-histidyl-[protein] + UTP = N(tele)-(5'-uridylyl)-L-histidyl-[protein] + diphosphate. The catalysed reaction is L-seryl-[protein] + UTP = O-(5'-uridylyl)-L-seryl-[protein] + diphosphate. It catalyses the reaction L-tyrosyl-[protein] + UTP = O-(5'-uridylyl)-L-tyrosyl-[protein] + diphosphate. Functionally, nucleotidyltransferase involved in the post-translational modification of proteins. It can catalyze the addition of adenosine monophosphate (AMP) or uridine monophosphate (UMP) to a protein, resulting in modifications known as AMPylation and UMPylation. The polypeptide is Protein nucleotidyltransferase YdiU (Salmonella paratyphi A (strain ATCC 9150 / SARB42)).